The primary structure comprises 56 residues: Protein p56 (56 aa).

The protein belongs to the phi29likevirus protein p56 family. Homodimer. Interacts with host UDG; this interaction inhibits the uracil-DNA glycosylase.

Inhibits the host uracil-DNA glycosylase (UDG), an enzyme which removes uracil residues from DNA by the base excision repair. Interacts with host uracil-DNA glycosylase and prevents the latter from binding to DNA. Since the viral DNA polymerase efficiently incorporates dUMP into DNA, the virus needs to prevent the deleterious effect caused by host UDG when it eliminates uracil residues present in the viral genome. This chain is Protein p56, found in Bacillus phage phi29 (Bacteriophage phi-29).